We begin with the raw amino-acid sequence, 79 residues long: MORN repeat-containing protein 2 (79 aa).

MORN repeat units follow at residues 15–36 (YEGQFKDNMFHGLGTYTFPNGA) and 38–55 (YTGNFNENRVEGEGEYTD).

The protein localises to the cytoplasmic vesicle. It is found in the secretory vesicle. It localises to the acrosome. The protein resides in the nucleus. Its function is as follows. Might have a role in spermatogenesis. This chain is MORN repeat-containing protein 2, found in Homo sapiens (Human).